Here is a 403-residue protein sequence, read N- to C-terminus: MESSREEALRCIGLARKYLNAGEYDKALKFANKSLRIHATTEGEDFVKQIEKQKLTGSPNPQATPKQENKSNFFSEKQSVRENGNSSAGEKKQKWTSEQHLLVQKIIKYKNHQYYEILDLKKTCTDTEIKKSYKKLALQLHPDKNHAPSADEAFKMVSKAFQVLSDPNLRAHYDRTGMDPESRASAASSSFSSNAGGHPGFSAYPQANMSPEDLFNSFFGDQFFSGPGTFFFGGGPGIRVHQFGGRPRNFARRQQAQDMPPKSIFYQLLPLIVVILFAFLSNFSWSDSTSVNTRYSFQQNYKYTVPRTTAKHNIPYYMSQKDLDKLSSRDIRRLNEKVEHTYTQNVHNACLREQQIKEDEIRRAQGWFFPDKEALKKAKELRLPNCEELNRLGYRTYSNSYYF.

The segment covering 55–88 (LTGSPNPQATPKQENKSNFFSEKQSVRENGNSSA) has biased composition (polar residues). The tract at residues 55–95 (LTGSPNPQATPKQENKSNFFSEKQSVRENGNSSAGEKKQKW) is disordered. Ser58 bears the Phosphoserine mark. One can recognise a J domain in the interval 113-177 (QYYEILDLKK…NLRAHYDRTG (65 aa)). Residues 263-283 (SIFYQLLPLIVVILFAFLSNF) traverse the membrane as a helical segment.

It is found in the endoplasmic reticulum membrane. This is an uncharacterized protein from Schizosaccharomyces pombe (strain 972 / ATCC 24843) (Fission yeast).